A 137-amino-acid polypeptide reads, in one-letter code: Large ribosomal subunit protein uL16 (137 aa).

It belongs to the universal ribosomal protein uL16 family. As to quaternary structure, part of the 50S ribosomal subunit.

Its function is as follows. Binds 23S rRNA and is also seen to make contacts with the A and possibly P site tRNAs. The polypeptide is Large ribosomal subunit protein uL16 (Solidesulfovibrio magneticus (strain ATCC 700980 / DSM 13731 / RS-1) (Desulfovibrio magneticus)).